Here is a 180-residue protein sequence, read N- to C-terminus: ATP synthase subunit delta (180 aa).

This sequence belongs to the ATPase delta chain family. As to quaternary structure, F-type ATPases have 2 components, F(1) - the catalytic core - and F(0) - the membrane proton channel. F(1) has five subunits: alpha(3), beta(3), gamma(1), delta(1), epsilon(1). F(0) has three main subunits: a(1), b(2) and c(10-14). The alpha and beta chains form an alternating ring which encloses part of the gamma chain. F(1) is attached to F(0) by a central stalk formed by the gamma and epsilon chains, while a peripheral stalk is formed by the delta and b chains.

The protein resides in the cell membrane. Functionally, f(1)F(0) ATP synthase produces ATP from ADP in the presence of a proton or sodium gradient. F-type ATPases consist of two structural domains, F(1) containing the extramembraneous catalytic core and F(0) containing the membrane proton channel, linked together by a central stalk and a peripheral stalk. During catalysis, ATP synthesis in the catalytic domain of F(1) is coupled via a rotary mechanism of the central stalk subunits to proton translocation. In terms of biological role, this protein is part of the stalk that links CF(0) to CF(1). It either transmits conformational changes from CF(0) to CF(1) or is implicated in proton conduction. The chain is ATP synthase subunit delta from Lactobacillus delbrueckii subsp. bulgaricus (strain ATCC BAA-365 / Lb-18).